Reading from the N-terminus, the 48-residue chain is uncharacterized protein (48 aa).

This is an uncharacterized protein from Escherichia coli (Bacteriophage HK022).